A 278-amino-acid polypeptide reads, in one-letter code: NAD kinase (278 aa).

Asp-56 acts as the Proton acceptor in catalysis. NAD(+)-binding positions include 56-57 (DG), 132-133 (NE), Arg-158, Asp-160, and 171-176 (TAYNKS).

The protein belongs to the NAD kinase family. A divalent metal cation is required as a cofactor.

It is found in the cytoplasm. It catalyses the reaction NAD(+) + ATP = ADP + NADP(+) + H(+). Involved in the regulation of the intracellular balance of NAD and NADP, and is a key enzyme in the biosynthesis of NADP. Catalyzes specifically the phosphorylation on 2'-hydroxyl of the adenosine moiety of NAD to yield NADP. In Streptococcus agalactiae serotype V (strain ATCC BAA-611 / 2603 V/R), this protein is NAD kinase.